The primary structure comprises 719 residues: Capsid protein (719 aa).

The interval 647–678 is disordered; it reads GDALPSRERKRQAWQDSTSEETESEAEAQEEK. A compositionally biased stretch (acidic residues) spans 664-674; that stretch reads TSEETESEAEA.

It belongs to the anelloviridae capsid protein family.

The protein resides in the virion. Functionally, self assemble to form an icosahedral capsid. The protein is Capsid protein of Torque teno virus (isolate Human/Germany/KAV/2001) (TTV).